We begin with the raw amino-acid sequence, 644 residues long: Exoribonuclease 2 (644 aa).

Residues 189-516 enclose the RNB domain; the sequence is REDLTALDFV…NHRLLKAVIK (328 aa). Positions 561–643 constitute an S1 motif domain; that stretch reads DTRFAAEIVD…ETRSIIARPV (83 aa).

Belongs to the RNR ribonuclease family. RNase II subfamily.

The protein localises to the cytoplasm. It carries out the reaction Exonucleolytic cleavage in the 3'- to 5'-direction to yield nucleoside 5'-phosphates.. Its function is as follows. Involved in mRNA degradation. Hydrolyzes single-stranded polyribonucleotides processively in the 3' to 5' direction. This is Exoribonuclease 2 from Escherichia coli O139:H28 (strain E24377A / ETEC).